Consider the following 87-residue polypeptide: MKSKISEYTEKEFLEFVEDIYTNNKKKFPTEESHIQAVLEFKKLTEHPSGSDLLYYPNENREDSPAGVVKEVKEWRASKGLPGFKAG.

This sequence belongs to the colicins ColE2/ColE8/ColE9 and pyocins S1/S2 family.

This is Pyocin-S1 immunity protein (imm1) from Pseudomonas aeruginosa.